The primary structure comprises 521 residues: Serine/threonine-protein kinase A (521 aa).

The Protein kinase domain maps to 15–289; sequence YQLVELVGSG…DVIIRAIDAI (275 aa). ATP-binding positions include 21 to 29 and Lys-45; that span reads VGSGAMGQV. Residue Asp-148 is the Proton acceptor of the active site.

The protein belongs to the protein kinase superfamily. Ser/Thr protein kinase family. Autophosphorylated.

The enzyme catalyses L-seryl-[protein] + ATP = O-phospho-L-seryl-[protein] + ADP + H(+). The catalysed reaction is L-threonyl-[protein] + ATP = O-phospho-L-threonyl-[protein] + ADP + H(+). Protein kinase that regulates cellular motility via phosphorylation of membrane proteins. This Synechocystis sp. (strain ATCC 27184 / PCC 6803 / Kazusa) protein is Serine/threonine-protein kinase A (spkA).